Here is a 164-residue protein sequence, read N- to C-terminus: UPF0262 protein Xaut_1232 (164 aa).

It belongs to the UPF0262 family.

This is UPF0262 protein Xaut_1232 from Xanthobacter autotrophicus (strain ATCC BAA-1158 / Py2).